A 1180-amino-acid polypeptide reads, in one-letter code: Neurexin like receptor 1 (1180 aa).

An N-terminal signal peptide occupies residues 1–20; that stretch reads MSGLCLVLLLSIFAVSQSSG. The Extracellular segment spans residues 21-1108; that stretch reads ECSDVSFSSV…SQNKQDLVSK (1088 aa). The 167-residue stretch at 124-290 folds into the Laminin G-like 1 domain; the sequence is PITAFDDSSY…LSPNEVHNQC (167 aa). N-linked (GlcNAc...) asparagine glycosylation is present at asparagine 229. A disulfide bridge links cysteine 267 with cysteine 290. 4 N-linked (GlcNAc...) asparagine glycosylation sites follow: asparagine 302, asparagine 336, asparagine 355, and asparagine 436. The EGF-like 1 domain maps to 444–481; that stretch reads FQEKCLPNPCENGGGCVQSALDDYVCNCKEGYKGKNCH. 3 cysteine pairs are disulfide-bonded: cysteine 448–cysteine 459, cysteine 453–cysteine 469, and cysteine 471–cysteine 480. 2 N-linked (GlcNAc...) asparagine glycosylation sites follow: asparagine 522 and asparagine 636. Residues 695–863 enclose the Laminin G-like 2 domain; sequence TFDPVTFSNR…GVAIGDDGYC (169 aa). In terms of domain architecture, EGF-like 2 spans 859–896; that stretch reads DDGYCRPDLCQNGGQCVDKYDGYVCDCSMTPFGGSDCT. Disulfide bonds link cysteine 863–cysteine 874, cysteine 868–cysteine 883, and cysteine 885–cysteine 895. Asparagine 933, asparagine 949, asparagine 978, asparagine 997, asparagine 1011, and asparagine 1052 each carry an N-linked (GlcNAc...) asparagine glycan. Residues 1109 to 1129 form a helical membrane-spanning segment; that stretch reads AIIGGGILALSLFILCMSSLI. The Cytoplasmic portion of the chain corresponds to 1130 to 1180; that stretch reads CYMRSRPEGVYKTNETGENCSPSRSEEPLVHNTTSNNNNNPTYASNKEYFC. The segment covering 1142–1152 has biased composition (polar residues); sequence TNETGENCSPS. The interval 1142 to 1180 is disordered; it reads TNETGENCSPSRSEEPLVHNTTSNNNNNPTYASNKEYFC. Low complexity predominate over residues 1161–1171; it reads NTTSNNNNNPT.

It belongs to the neurexin family. As to quaternary structure, interacts (via the intracellular domain) with F-actin; the interaction is required for anchoring F-actin at the membrane for gap junction formation. Highly expressed in pharyngeal g1 and g2 gland cells, pharyngeal muscle cells and the unilateral GABAergic RIS interneuron (at protein level). Expressed in pm5 pharyngeal muscle cells and the nerve ring.

The protein localises to the cell membrane. Its subcellular location is the cell junction. The protein resides in the gap junction. Its function is as follows. Required for gap junction formation, playing a role in anchoring the cytoskeletal component F-actin to the membrane of adjacent cells and thus facilitating the formation of gap junction channels in embryonic cells, muscle cells and neuronal cells. Plays a role in maintaining gap junction activity to promote pharyngeal muscle contraction. The sequence is that of Neurexin like receptor 1 from Caenorhabditis elegans.